Here is a 536-residue protein sequence, read N- to C-terminus: Multicopper oxidase terE (536 aa).

Residues 1-21 form a disordered region; the sequence is MHWHGLSQSTAPFSDGSPQAS. 3 consecutive Plastocyanin-like domains span residues 1 to 67, 79 to 238, and 354 to 488; these read MHWH…VEEK, ERIL…LSYN, and TVQK…VWMM. 4 residues coordinate Cu cation: His2, His4, His48, and His50. Residue His397 coordinates Cu cation.

It belongs to the multicopper oxidase family.

It participates in secondary metabolite biosynthesis. Multicopper oxidase; part of the gene cluster that mediates the biosynthesis of terrein, a fungal metabolite with ecological, antimicrobial, antiproliferative, and antioxidative activities. The first step in the pathway is performed by the polyketide synthase terA that produces 4-hydroxy-6-methylpyranon (4-HMP), orsellinic acid (OA), and 2,3-dehydro-6-hydroxymellein (2,3-dehydro-6-HM) by condensing acetyl-CoA with two, three, or four malonyl-CoA units, respectively. 4-HMP and OA are not pathway intermediates, but are rather shunt or side products. 2,3-dehydro-6-HM is further converted to 6-hydroxymellein (6-HM) by the 6-hydroxymellein synthase terB. The monooxygenases terC and terD, the multicopper oxidase terE and the Kelch-like protein terF are then involved in the transformation of 6-HM to terrein. Even if they are co-regulated with the other terrein cluster genes, terH and terI seem to be dispensable for terrein production; whereas one or both of the 2 transporters terG and terJ are probably required for efficient secretion of metabolites. This Aspergillus terreus (strain NIH 2624 / FGSC A1156) protein is Multicopper oxidase terE.